Consider the following 314-residue polypeptide: Replication initiation protein (314 aa).

It belongs to the plasmid replication initiation factor family.

In terms of biological role, this protein is probably a specific topoisomerase involved in initiating replication. This protein is specifically required and may be rate-limiting for replication of the plasmid in vivo. This Staphylococcus aureus protein is Replication initiation protein (repC).